A 181-amino-acid chain; its full sequence is Protein CRABS CLAW (181 aa).

The segment at 26–53 adopts a C4-type zinc-finger fold; sequence CSICNTILAVGIPLKRMLDTVTVKCGHC. The interval 80–122 is disordered; that stretch reads GSDYKKGSSSSSSSSTSSDQPPSPSPPFVVKPPEKKQRLPSAY. The span at 87 to 99 shows a compositional bias: low complexity; sequence SSSSSSSSTSSDQ. Positions 100–109 are enriched in pro residues; the sequence is PPSPSPPFVV.

Belongs to the YABBY family. In terms of tissue distribution, restricted to flowers, mostly in carpels and nectaries. Expressed at low levels in sepal primordia (buds), sepal receptacle and developing petal. Not detected in placental tissues, septum, stigma and ovules.

Its subcellular location is the nucleus. In terms of biological role, transcription factor required for the initiation of nectary development. Also involved in suppressing early radial growth of the gynoecium, in promoting its later elongation and in fusion of its carpels by regulating both cell division and expansion. Establishes the polar differentiation in the carpels by specifying abaxial cell fate in the ovary wall. Regulates both cell division and expansion. The polypeptide is Protein CRABS CLAW (Arabidopsis thaliana (Mouse-ear cress)).